A 276-amino-acid chain; its full sequence is tRNA (guanine-N(7)-)-methyltransferase (276 aa).

The disordered stretch occupies residues 1–23; sequence MRPDPAPLDPTDASPAQARRHQP. Positions 103, 128, 155, and 178 each coordinate S-adenosyl-L-methionine. The active site involves Asp-178. Residues Lys-182, Asp-214, and 252–255 each bind substrate; that span reads TRYE.

It belongs to the class I-like SAM-binding methyltransferase superfamily. TrmB family.

The catalysed reaction is guanosine(46) in tRNA + S-adenosyl-L-methionine = N(7)-methylguanosine(46) in tRNA + S-adenosyl-L-homocysteine. The protein operates within tRNA modification; N(7)-methylguanine-tRNA biosynthesis. Its function is as follows. Catalyzes the formation of N(7)-methylguanine at position 46 (m7G46) in tRNA. The chain is tRNA (guanine-N(7)-)-methyltransferase from Cutibacterium acnes (strain DSM 16379 / KPA171202) (Propionibacterium acnes).